The primary structure comprises 150 residues: Large ribosomal subunit protein bL9 (150 aa).

The protein belongs to the bacterial ribosomal protein bL9 family.

Its function is as follows. Binds to the 23S rRNA. The protein is Large ribosomal subunit protein bL9 of Lactococcus lactis subsp. cremoris (strain MG1363).